Consider the following 716-residue polypeptide: 1,4-alpha-glucan branching enzyme GlgB (716 aa).

Asp398 functions as the Nucleophile in the catalytic mechanism. The active-site Proton donor is the Glu451.

This sequence belongs to the glycosyl hydrolase 13 family. GlgB subfamily. Monomer.

It catalyses the reaction Transfers a segment of a (1-&gt;4)-alpha-D-glucan chain to a primary hydroxy group in a similar glucan chain.. Its pathway is glycan biosynthesis; glycogen biosynthesis. Functionally, catalyzes the formation of the alpha-1,6-glucosidic linkages in glycogen by scission of a 1,4-alpha-linked oligosaccharide from growing alpha-1,4-glucan chains and the subsequent attachment of the oligosaccharide to the alpha-1,6 position. This is 1,4-alpha-glucan branching enzyme GlgB from Nitrobacter winogradskyi (strain ATCC 25391 / DSM 10237 / CIP 104748 / NCIMB 11846 / Nb-255).